We begin with the raw amino-acid sequence, 389 residues long: Chalcone synthase 9 (389 aa).

Cys164 is an active-site residue.

The protein belongs to the thiolase-like superfamily. Chalcone/stilbene synthases family.

It carries out the reaction (E)-4-coumaroyl-CoA + 3 malonyl-CoA + 3 H(+) = 2',4,4',6'-tetrahydroxychalcone + 3 CO2 + 4 CoA. It participates in secondary metabolite biosynthesis; flavonoid biosynthesis. Functionally, the primary product of this enzyme is 4,2',4',6'-tetrahydroxychalcone (also termed naringenin-chalcone or chalcone) which can under specific conditions spontaneously isomerize into naringenin. In Daucus carota (Wild carrot), this protein is Chalcone synthase 9 (CHS9).